The following is a 250-amino-acid chain: 2,3-bisphosphoglycerate-dependent phosphoglycerate mutase (250 aa).

Residues 10–17 (RHGESQWN), 23–24 (TG), Arg62, 89–92 (ERHY), Lys100, 116–117 (RR), and 185–186 (GN) each bind substrate. The active-site Tele-phosphohistidine intermediate is His11. Glu89 (proton donor/acceptor) is an active-site residue.

This sequence belongs to the phosphoglycerate mutase family. BPG-dependent PGAM subfamily. In terms of assembly, homodimer.

It carries out the reaction (2R)-2-phosphoglycerate = (2R)-3-phosphoglycerate. It participates in carbohydrate degradation; glycolysis; pyruvate from D-glyceraldehyde 3-phosphate: step 3/5. Functionally, catalyzes the interconversion of 2-phosphoglycerate and 3-phosphoglycerate. In Pectobacterium atrosepticum (strain SCRI 1043 / ATCC BAA-672) (Erwinia carotovora subsp. atroseptica), this protein is 2,3-bisphosphoglycerate-dependent phosphoglycerate mutase.